Consider the following 427-residue polypeptide: Glutamate-1-semialdehyde 2,1-aminomutase (427 aa).

Residue K265 is modified to N6-(pyridoxal phosphate)lysine.

It belongs to the class-III pyridoxal-phosphate-dependent aminotransferase family. HemL subfamily. In terms of assembly, homodimer. Pyridoxal 5'-phosphate is required as a cofactor.

It localises to the cytoplasm. The enzyme catalyses (S)-4-amino-5-oxopentanoate = 5-aminolevulinate. The protein operates within porphyrin-containing compound metabolism; protoporphyrin-IX biosynthesis; 5-aminolevulinate from L-glutamyl-tRNA(Glu): step 2/2. The polypeptide is Glutamate-1-semialdehyde 2,1-aminomutase (Edwardsiella ictaluri (strain 93-146)).